A 133-amino-acid polypeptide reads, in one-letter code: MSNHDPISDMLTRIRNASQKKHTSTSIPASRMILSIAKVLQKEGFIADINEEGEGYESKIVLGLKYSGKNRFPTIRSMQRVSKPGLRVYKNTKGLPKVLGGLGVAIVSTSKGVMSDRDARKQGIGGEVLCYVY.

Belongs to the universal ribosomal protein uS8 family. In terms of assembly, part of the 30S ribosomal subunit. Contacts proteins S5 and S12.

In terms of biological role, one of the primary rRNA binding proteins, it binds directly to 16S rRNA central domain where it helps coordinate assembly of the platform of the 30S subunit. The chain is Small ribosomal subunit protein uS8 from Prochlorococcus marinus (strain MIT 9515).